The following is a 211-amino-acid chain: Nucleoside triphosphate pyrophosphatase (211 aa).

The active-site Proton acceptor is the aspartate 76.

The protein belongs to the Maf family. A divalent metal cation is required as a cofactor.

It localises to the cytoplasm. The enzyme catalyses a ribonucleoside 5'-triphosphate + H2O = a ribonucleoside 5'-phosphate + diphosphate + H(+). It catalyses the reaction a 2'-deoxyribonucleoside 5'-triphosphate + H2O = a 2'-deoxyribonucleoside 5'-phosphate + diphosphate + H(+). Functionally, nucleoside triphosphate pyrophosphatase. May have a dual role in cell division arrest and in preventing the incorporation of modified nucleotides into cellular nucleic acids. This chain is Nucleoside triphosphate pyrophosphatase, found in Saccharopolyspora erythraea (strain ATCC 11635 / DSM 40517 / JCM 4748 / NBRC 13426 / NCIMB 8594 / NRRL 2338).